Reading from the N-terminus, the 505-residue chain is ATP synthase subunit alpha (505 aa).

Residue 169–176 coordinates ATP; sequence GDRQIGKT.

It belongs to the ATPase alpha/beta chains family. In terms of assembly, F-type ATPases have 2 components, CF(1) - the catalytic core - and CF(0) - the membrane proton channel. CF(1) has five subunits: alpha(3), beta(3), gamma(1), delta(1), epsilon(1). CF(0) has three main subunits: a(1), b(2) and c(9-12). The alpha and beta chains form an alternating ring which encloses part of the gamma chain. CF(1) is attached to CF(0) by a central stalk formed by the gamma and epsilon chains, while a peripheral stalk is formed by the delta and b chains.

It localises to the cell inner membrane. The catalysed reaction is ATP + H2O + 4 H(+)(in) = ADP + phosphate + 5 H(+)(out). In terms of biological role, produces ATP from ADP in the presence of a proton gradient across the membrane. The alpha chain is a regulatory subunit. This Desulfatibacillum aliphaticivorans protein is ATP synthase subunit alpha.